Reading from the N-terminus, the 155-residue chain is 6,7-dimethyl-8-ribityllumazine synthase (155 aa).

Residues F26, 60-62 (ALE), and 84-86 (AVI) each bind 5-amino-6-(D-ribitylamino)uracil. 89-90 (ET) is a binding site for (2S)-2-hydroxy-3-oxobutyl phosphate. The active-site Proton donor is H92. N117 provides a ligand contact to 5-amino-6-(D-ribitylamino)uracil. R131 is a (2S)-2-hydroxy-3-oxobutyl phosphate binding site.

Belongs to the DMRL synthase family.

The catalysed reaction is (2S)-2-hydroxy-3-oxobutyl phosphate + 5-amino-6-(D-ribitylamino)uracil = 6,7-dimethyl-8-(1-D-ribityl)lumazine + phosphate + 2 H2O + H(+). It functions in the pathway cofactor biosynthesis; riboflavin biosynthesis; riboflavin from 2-hydroxy-3-oxobutyl phosphate and 5-amino-6-(D-ribitylamino)uracil: step 1/2. In terms of biological role, catalyzes the formation of 6,7-dimethyl-8-ribityllumazine by condensation of 5-amino-6-(D-ribitylamino)uracil with 3,4-dihydroxy-2-butanone 4-phosphate. This is the penultimate step in the biosynthesis of riboflavin. The protein is 6,7-dimethyl-8-ribityllumazine synthase of Chromobacterium violaceum (strain ATCC 12472 / DSM 30191 / JCM 1249 / CCUG 213 / NBRC 12614 / NCIMB 9131 / NCTC 9757 / MK).